The primary structure comprises 507 residues: 25-hydroxyvitamin D-1 alpha hydroxylase, mitochondrial (507 aa).

Residue Cys454 participates in heme binding.

It belongs to the cytochrome P450 family. It depends on heme as a cofactor. In terms of tissue distribution, kidney.

It is found in the mitochondrion membrane. It catalyses the reaction calcidiol + 2 reduced [adrenodoxin] + O2 + 2 H(+) = calcitriol + 2 oxidized [adrenodoxin] + H2O. The enzyme catalyses secalciferol + 2 reduced [adrenodoxin] + O2 + 2 H(+) = calcitetrol + 2 oxidized [adrenodoxin] + H2O. It carries out the reaction 25-hydroxy-24-oxocalciol + 2 reduced [adrenodoxin] + O2 + 2 H(+) = (1S)-1,25-dihydroxy-24-oxocalciol + 2 oxidized [adrenodoxin] + H2O. The catalysed reaction is 25-hydroxyvitamin D2 + 2 reduced [adrenodoxin] + O2 + 2 H(+) = 1alpha,25-dihydroxyvitamin D2 + 2 oxidized [adrenodoxin] + H2O. The protein operates within hormone biosynthesis; vitamin D biosynthesis. Its activity is regulated as follows. Activated by cardiolipin and dioleoyl phosphatidylethanolamine (DOPE), phospholipids found in the inner mitochondrial membrane. Inhibited by high substrate concentration. Its function is as follows. A cytochrome P450 monooxygenase involved in vitamin D metabolism and in calcium and phosphorus homeostasis. Catalyzes the rate-limiting step in the activation of vitamin D in the kidney, namely the hydroxylation of 25-hydroxyvitamin D3/calcidiol at the C1-alpha position to form the hormonally active form of vitamin D3, 1alpha,25-dihydroxyvitamin D3/calcitriol that acts via the vitamin D receptor (VDR). Has 1-alpha-hydroxylase activity on vitamin D intermediates of the CYP24A1-mediated inactivation pathway. Converts 24R,25-dihydroxyvitamin D3/secalciferol to 1-alpha,24,25-trihydroxyvitamin D3, an active ligand of VDR. Also active on 25-hydroxyvitamin D2. Mechanistically, uses molecular oxygen inserting one oxygen atom into a substrate, and reducing the second into a water molecule, with two electrons provided by NADPH via FDXR/adrenodoxin reductase and FDX1/adrenodoxin. The protein is 25-hydroxyvitamin D-1 alpha hydroxylase, mitochondrial (Cyp27b1) of Mus musculus (Mouse).